The sequence spans 212 residues: Small ribosomal subunit protein uS19m (212 aa).

The transit peptide at 1-29 (MAFCTKLGGHWKQGVNVPVSSMLGSLRYM) directs the protein to the mitochondrion. The RRM domain occupies 31–109 (TKLYIGGLSP…FNISVNVAKD (79 aa)).

The protein belongs to the universal ribosomal protein uS19 family. As to quaternary structure, component of the mitochondrial ribosome small subunit.

It localises to the mitochondrion. The RNA-binding domain found in RPS19 may functionally replace the missing mitochondrial RPS13. The sequence is that of Small ribosomal subunit protein uS19m (RPS19) from Arabidopsis thaliana (Mouse-ear cress).